A 441-amino-acid polypeptide reads, in one-letter code: ATP-dependent RNA helicase SUB2-1 (441 aa).

Over residues 1 to 19 (MSHEGEEDLLEYSDNEQDI) the composition is skewed to acidic residues. The tract at residues 1–46 (MSHEGEEDLLEYSDNEQDIQVDASKAAEPSELDATTAEDASNGDAE) is disordered. A Q motif motif is present at residues 57 to 85 (TGFKDFLLKPELARAIIDCGFEHPSEVQQ). Residues 88 to 263 (IPQSIHGTDV…RRFLQNPLEI (176 aa)) enclose the Helicase ATP-binding domain. Residue 101-108 (AKSGLGKT) participates in ATP binding. The short motif at 210–213 (DECD) is the DECD box element. Residues 291-436 (KLAQLLDDLE…EFPEEGIDPS (146 aa)) enclose the Helicase C-terminal domain.

It belongs to the DEAD box helicase family. DECD subfamily.

The protein resides in the nucleus. The enzyme catalyses ATP + H2O = ADP + phosphate + H(+). In terms of biological role, ATP-binding RNA helicase involved in transcription elongation and required for the export of mRNA out of the nucleus. SUB2 also plays a role in pre-mRNA splicing and spliceosome assembly. May be involved in rDNA and telomeric silencing, and maintenance of genome integrity. The sequence is that of ATP-dependent RNA helicase SUB2-1 (SUB2-1) from Vanderwaltozyma polyspora (strain ATCC 22028 / DSM 70294 / BCRC 21397 / CBS 2163 / NBRC 10782 / NRRL Y-8283 / UCD 57-17) (Kluyveromyces polysporus).